The primary structure comprises 340 residues: Branched-chain-amino-acid aminotransferase (340 aa).

Position 187 is an N6-(pyridoxal phosphate)lysine (K187).

The protein belongs to the class-IV pyridoxal-phosphate-dependent aminotransferase family. Pyridoxal 5'-phosphate is required as a cofactor.

The enzyme catalyses L-leucine + 2-oxoglutarate = 4-methyl-2-oxopentanoate + L-glutamate. The catalysed reaction is L-isoleucine + 2-oxoglutarate = (S)-3-methyl-2-oxopentanoate + L-glutamate. It carries out the reaction L-valine + 2-oxoglutarate = 3-methyl-2-oxobutanoate + L-glutamate. It participates in amino-acid biosynthesis; L-isoleucine biosynthesis; L-isoleucine from 2-oxobutanoate: step 4/4. The protein operates within amino-acid biosynthesis; L-leucine biosynthesis; L-leucine from 3-methyl-2-oxobutanoate: step 4/4. Its pathway is amino-acid biosynthesis; L-valine biosynthesis; L-valine from pyruvate: step 4/4. Its function is as follows. Acts on leucine, isoleucine and valine. This is Branched-chain-amino-acid aminotransferase (ilvE) from Helicobacter pylori (strain J99 / ATCC 700824) (Campylobacter pylori J99).